The sequence spans 329 residues: ATP-dependent (S)-NAD(P)H-hydrate dehydratase (329 aa).

One can recognise a YjeF C-terminal domain in the interval 35–326 (TLQLVRNIIP…AEVGAAFSKL (292 aa)). Phosphotyrosine is present on Tyr67. (6S)-NADPHX contacts are provided by residues Gly135 and 188–194 (NHMEFSR). Asn207 and Asn222 each carry an N-linked (GlcNAc...) asparagine glycan. ATP is bound by residues 228-232 (KGERD) and 247-256 (GSSRRCGGQG). Asp257 is a (6S)-NADPHX binding site. Asn279 carries N-linked (GlcNAc...) asparagine glycosylation.

The protein belongs to the NnrD/CARKD family. Mg(2+) is required as a cofactor.

The protein localises to the mitochondrion. The enzyme catalyses (6S)-NADHX + ATP = ADP + phosphate + NADH + H(+). It carries out the reaction (6S)-NADPHX + ATP = ADP + phosphate + NADPH + H(+). Its function is as follows. Catalyzes the dehydration of the S-form of NAD(P)HX at the expense of ATP, which is converted to ADP. Together with NAD(P)HX epimerase, which catalyzes the epimerization of the S- and R-forms, the enzyme allows the repair of both epimers of NAD(P)HX, a damaged form of NAD(P)H that is a result of enzymatic or heat-dependent hydration. This Pongo abelii (Sumatran orangutan) protein is ATP-dependent (S)-NAD(P)H-hydrate dehydratase.